We begin with the raw amino-acid sequence, 816 residues long: Probable E3 ubiquitin-protein ligase hulA (816 aa).

The 112-residue stretch at 1 to 112 (MGSNLPAQPN…QMGGDEMLTR (112 aa)) folds into the C2 domain. 2 disordered regions span residues 134–238 (NLST…GWER) and 254–354 (RTTT…YFVD). Residues 160 to 178 (VPQVAPSSSHPAASGAAPV) are compositionally biased toward low complexity. Polar residues predominate over residues 181–192 (SASNPSLNPQRV). Residues 193–213 (PSTTRPSSTAAPASAAGAAAS) are compositionally biased toward low complexity. Composition is skewed to polar residues over residues 214–227 (NTHG…SFED) and 254–267 (RTTT…NYNE). The WW 1 domain maps to 230–263 (GRLPAGWERREDNLGRTYYVDHNTRTTTWTRPSS). Residues 268 to 295 (HAQRSQREANMQLERRAHQSRMLPEDRT) are compositionally biased toward basic and acidic residues. Polar residues predominate over residues 296-310 (GANSPNLPESSQQAH). The span at 325 to 334 (ATGATTAGTG) shows a compositional bias: low complexity. WW domains lie at 334–367 (GELP…DPRR) and 394–427 (GPLP…DPRL). The HECT domain maps to 483–816 (SASDLKKRLM…VEETLGFGQE (334 aa)). The active-site Glycyl thioester intermediate is the Cys-784.

Belongs to the RSP5/NEDD4 family. Interacts with creD.

Its subcellular location is the cytoplasm. The catalysed reaction is S-ubiquitinyl-[E2 ubiquitin-conjugating enzyme]-L-cysteine + [acceptor protein]-L-lysine = [E2 ubiquitin-conjugating enzyme]-L-cysteine + N(6)-ubiquitinyl-[acceptor protein]-L-lysine.. It participates in protein modification; protein ubiquitination. Functionally, E3 ubiquitin-protein ligase which accepts ubiquitin from an E2 ubiquitin-conjugating enzyme in the form of a thioester and then directly transfers the ubiquitin to targeted substrates. Probably involved in the regulatory network controlling carbon source utilization. This is Probable E3 ubiquitin-protein ligase hulA (hulA) from Neosartorya fischeri (strain ATCC 1020 / DSM 3700 / CBS 544.65 / FGSC A1164 / JCM 1740 / NRRL 181 / WB 181) (Aspergillus fischerianus).